A 179-amino-acid chain; its full sequence is Acireductone dioxygenase (179 aa).

Fe(2+) contacts are provided by histidine 88, histidine 90, glutamate 94, and histidine 133. Ni(2+) contacts are provided by histidine 88, histidine 90, glutamate 94, and histidine 133.

It belongs to the acireductone dioxygenase (ARD) family. Monomer. Interacts with MMP14. The cofactor is Fe(2+). Ni(2+) is required as a cofactor.

It is found in the cytoplasm. Its subcellular location is the nucleus. The protein resides in the cell membrane. The catalysed reaction is 1,2-dihydroxy-5-(methylsulfanyl)pent-1-en-3-one + O2 = 4-methylsulfanyl-2-oxobutanoate + formate + 2 H(+). It carries out the reaction 1,2-dihydroxy-5-(methylsulfanyl)pent-1-en-3-one + O2 = 3-(methylsulfanyl)propanoate + CO + formate + 2 H(+). The protein operates within amino-acid biosynthesis; L-methionine biosynthesis via salvage pathway; L-methionine from S-methyl-5-thio-alpha-D-ribose 1-phosphate: step 5/6. Its function is as follows. Catalyzes 2 different reactions between oxygen and the acireductone 1,2-dihydroxy-3-keto-5-methylthiopentene (DHK-MTPene) depending upon the metal bound in the active site. Fe-containing acireductone dioxygenase (Fe-ARD) produces formate and 2-keto-4-methylthiobutyrate (KMTB), the alpha-ketoacid precursor of methionine in the methionine recycle pathway. Ni-containing acireductone dioxygenase (Ni-ARD) produces methylthiopropionate, carbon monoxide and formate, and does not lie on the methionine recycle pathway. This is Acireductone dioxygenase (adi1) from Xenopus laevis (African clawed frog).